The chain runs to 342 residues: N-acetyl-gamma-glutamyl-phosphate reductase (342 aa).

Cysteine 149 is a catalytic residue.

This sequence belongs to the NAGSA dehydrogenase family. Type 1 subfamily.

Its subcellular location is the cytoplasm. It carries out the reaction N-acetyl-L-glutamate 5-semialdehyde + phosphate + NADP(+) = N-acetyl-L-glutamyl 5-phosphate + NADPH + H(+). It functions in the pathway amino-acid biosynthesis; L-arginine biosynthesis; N(2)-acetyl-L-ornithine from L-glutamate: step 3/4. In terms of biological role, catalyzes the NADPH-dependent reduction of N-acetyl-5-glutamyl phosphate to yield N-acetyl-L-glutamate 5-semialdehyde. The protein is N-acetyl-gamma-glutamyl-phosphate reductase of Jannaschia sp. (strain CCS1).